Here is a 155-residue protein sequence, read N- to C-terminus: MRAVVQRVSQASVTVGDEVVGAIGQGLLILLGIGVGDSEAEARLLAEKTANLRIFADEEGRFNRSLLDIGGEALVVSQFTLYADTRRGRRPSFSDAAPPEIAAPLVDVFAGELRRLGVAVSTGRFGAMMRVALVNDGPVTILLDSAIFREPRNQH.

The Gly-cisPro motif, important for rejection of L-amino acids signature appears at 137–138 (GP).

It belongs to the DTD family. Homodimer.

It is found in the cytoplasm. It catalyses the reaction glycyl-tRNA(Ala) + H2O = tRNA(Ala) + glycine + H(+). The enzyme catalyses a D-aminoacyl-tRNA + H2O = a tRNA + a D-alpha-amino acid + H(+). Functionally, an aminoacyl-tRNA editing enzyme that deacylates mischarged D-aminoacyl-tRNAs. Also deacylates mischarged glycyl-tRNA(Ala), protecting cells against glycine mischarging by AlaRS. Acts via tRNA-based rather than protein-based catalysis; rejects L-amino acids rather than detecting D-amino acids in the active site. By recycling D-aminoacyl-tRNA to D-amino acids and free tRNA molecules, this enzyme counteracts the toxicity associated with the formation of D-aminoacyl-tRNA entities in vivo and helps enforce protein L-homochirality. This chain is D-aminoacyl-tRNA deacylase, found in Roseiflexus sp. (strain RS-1).